Consider the following 244-residue polypeptide: Small ribosomal subunit protein uS3 (244 aa).

Residues 38–106 form the KH type-2 domain; it reads IRKYLNARLA…DIQINIFEVK (69 aa). Positions 217–244 are disordered; it reads TQSKESGRGNNGGNNGGGKNFKRKKNNR. Gly residues predominate over residues 225–235; that stretch reads GNNGGNNGGGK.

This sequence belongs to the universal ribosomal protein uS3 family. Part of the 30S ribosomal subunit. Forms a tight complex with proteins S10 and S14.

In terms of biological role, binds the lower part of the 30S subunit head. Binds mRNA in the 70S ribosome, positioning it for translation. This is Small ribosomal subunit protein uS3 from Bacteroides fragilis (strain ATCC 25285 / DSM 2151 / CCUG 4856 / JCM 11019 / LMG 10263 / NCTC 9343 / Onslow / VPI 2553 / EN-2).